A 1090-amino-acid chain; its full sequence is Exoglucanase B (1090 aa).

The signal sequence occupies residues 1–33 (MSSTTRRRSAWVAAATVGVSSFLAVAGITPAIA). Positions 34–53 (AAGAGQPATVTVPAASPVRA) are excised as a propeptide. Residues 54–699 (AVDGEYAQRF…RLFDDGTTTP (646 aa)) form a catalytic region. Asp513 (nucleophile) is an active-site residue. Fibronectin type-III domains follow at residues 706–791 (VPTG…TKAT), 797–887 (APSV…TKSD), and 897–984 (VPAG…TKTP). The 108-residue stretch at 983–1090 (TPQTGGSCSV…SFTLNGASCT (108 aa)) folds into the CBM2 domain. Cys990 and Cys1089 are joined by a disulfide. The tract at residues 1069–1090 (NGSHTGQNPNPASFTLNGASCT) is disordered. The span at 1070–1090 (GSHTGQNPNPASFTLNGASCT) shows a compositional bias: polar residues.

Belongs to the glycosyl hydrolase 48 (cellulase L) family.

It carries out the reaction Hydrolysis of (1-&gt;4)-beta-D-glucosidic linkages in cellulose and cellotetraose, releasing cellobiose from the non-reducing ends of the chains.. In terms of biological role, hydrolyzes cellohexaose to a mixture of cellotetraose, cellotriose and cellobiose, with only a trace of glucose. It hydrolyzed cellopentaose to cellotriose and cellobiose, and cellotetraose to cellobiose, but it did not hydrolyze cellotriose. Also has weak endoglucanase activity. Hydrolyzes glucosidic bonds with inversion of anomeric configuration. The sequence is that of Exoglucanase B (cbhB) from Cellulomonas fimi (strain ATCC 484 / DSM 20113 / JCM 1341 / CCUG 24087 / LMG 16345 / NBRC 15513 / NCIMB 8980 / NCTC 7547 / NRS-133).